The primary structure comprises 438 residues: RNA polymerase sigma factor SigA (438 aa).

The segment covering 1–11 has biased composition (basic residues); the sequence is MKKSKSKKKAA. Positions 1 to 69 are disordered; sequence MKKSKSKKKA…PLDLEGPLEA (69 aa). Over residues 12–26 the composition is skewed to basic and acidic residues; sequence KAQEVEVKEPVKEPE. Composition is skewed to acidic residues over residues 27–45 and 52–69; these read PLPELEAAEDLQDLPEPDP and PELEDLADPLDLEGPLEA. A sigma-70 factor domain-1 region spans residues 93 to 128; that stretch reads SDPVRQYLHEIGQVPLLTLEEEIDLARKVEEGMEAI. The interval 202 to 272 is sigma-70 factor domain-2; the sequence is LIEANLRLVV…NRAIADQART (71 aa). An Interaction with polymerase core subunit RpoC motif is present at residues 226–229; the sequence is DLIQ. Residues 281 to 359 form a sigma-70 factor domain-3 region; it reads ETINKLSRTA…DENLPSPVEA (79 aa). The sigma-70 factor domain-4 stretch occupies residues 372–424; sequence ALSKLSEREAMVLKLRKGLIDGREHTLEEVGAYFGVTRERIRQIENKALRKLK. A DNA-binding region (H-T-H motif) is located at residues 398–417; the sequence is LEEVGAYFGVTRERIRQIEN.

Belongs to the sigma-70 factor family. RpoD/SigA subfamily. In terms of assembly, interacts transiently with the RNA polymerase catalytic core formed by RpoA, RpoB, RpoC and RpoZ (2 alpha, 1 beta, 1 beta' and 1 omega subunit) to form the RNA polymerase holoenzyme that can initiate transcription.

The protein resides in the cytoplasm. Sigma factors are initiation factors that promote the attachment of RNA polymerase to specific initiation sites and are then released. This sigma factor is the primary sigma factor during exponential growth. The sequence is that of RNA polymerase sigma factor SigA from Thermus aquaticus.